The sequence spans 173 residues: MAYDVFTKVVSQADSRGEFLSNEQLDALANVVKEGNKRLDVVNRITSNASTIVTNAARALFEEQPQLIAPGGNAYTNRRMAACLRDMEIILRYITYAILAGDASILDDRCLNGLRETYQALGTPGSSVAVGIQKMKEAAINIANDPNGITKGDCSALISEVASYFDRAAAAVA.

N73 is subject to N4-methylasparagine. C83 and C154 together coordinate (2R,3E)-phycocyanobilin.

This sequence belongs to the phycobiliprotein family. In terms of assembly, heterodimer of an alpha and a beta subunit. Heterodimers further assemble into trimers and the trimers into hexamers. Post-translationally, contains two covalently linked bilin chromophores.

Its subcellular location is the cellular thylakoid membrane. In terms of biological role, light-harvesting photosynthetic bile pigment-protein from the phycobiliprotein complex (phycobilisome, PBS). Phycocyanin is the major phycobiliprotein in the PBS rod. The polypeptide is C-phycocyanin beta subunit (cpcB) (Mastigocladus laminosus (Fischerella sp.)).